The following is a 427-amino-acid chain: UPF0229 protein YeaH (427 aa).

The segment at 84–110 is disordered; the sequence is QSDRIERPQGGGGGSGSGQGQASQDGE. The span at 92–102 shows a compositional bias: gly residues; sequence QGGGGGSGSGQ.

Belongs to the UPF0229 family.

The polypeptide is UPF0229 protein YeaH (Escherichia fergusonii (strain ATCC 35469 / DSM 13698 / CCUG 18766 / IAM 14443 / JCM 21226 / LMG 7866 / NBRC 102419 / NCTC 12128 / CDC 0568-73)).